We begin with the raw amino-acid sequence, 706 residues long: Ribosomal RNA large subunit methyltransferase K/L (706 aa).

The THUMP domain maps to 43–154; it reads LLYQSLLWSR…RDMASVALDL (112 aa).

Belongs to the methyltransferase superfamily. RlmKL family.

It localises to the cytoplasm. It carries out the reaction guanosine(2445) in 23S rRNA + S-adenosyl-L-methionine = N(2)-methylguanosine(2445) in 23S rRNA + S-adenosyl-L-homocysteine + H(+). The enzyme catalyses guanosine(2069) in 23S rRNA + S-adenosyl-L-methionine = N(2)-methylguanosine(2069) in 23S rRNA + S-adenosyl-L-homocysteine + H(+). Functionally, specifically methylates the guanine in position 2445 (m2G2445) and the guanine in position 2069 (m7G2069) of 23S rRNA. The polypeptide is Ribosomal RNA large subunit methyltransferase K/L (Serratia proteamaculans (strain 568)).